Consider the following 221-residue polypeptide: Phosphoglycolate phosphatase (221 aa).

The Nucleophile role is filled by aspartate 7. Residues aspartate 7 and aspartate 9 each coordinate Mg(2+). Lysine 148 contacts substrate. Residues aspartate 171 and aspartate 175 each coordinate Mg(2+).

The protein belongs to the archaeal SPP-like hydrolase family. It depends on Mg(2+) as a cofactor.

It catalyses the reaction 2-phosphoglycolate + H2O = glycolate + phosphate. Catalyzes the dephosphorylation of 2-phosphoglycolate. The sequence is that of Phosphoglycolate phosphatase from Methanothermobacter thermautotrophicus (strain ATCC 29096 / DSM 1053 / JCM 10044 / NBRC 100330 / Delta H) (Methanobacterium thermoautotrophicum).